Here is a 142-residue protein sequence, read N- to C-terminus: Large ribosomal subunit protein uL13 (142 aa).

The protein belongs to the universal ribosomal protein uL13 family. Part of the 50S ribosomal subunit.

In terms of biological role, this protein is one of the early assembly proteins of the 50S ribosomal subunit, although it is not seen to bind rRNA by itself. It is important during the early stages of 50S assembly. This chain is Large ribosomal subunit protein uL13, found in Xylella fastidiosa (strain 9a5c).